A 494-amino-acid polypeptide reads, in one-letter code: Paired box protein Pax-2-B (494 aa).

Positions 15-141 (RHGGVNQLGG…SSINRIIRTK (127 aa)) form a DNA-binding region, paired. The interval 18–74 (GVNQLGGVFVNGRPLPDVVRQRIVELAHQGVRPCDISRQLRVSHGCVSKILGRYYET) is PAI subdomain. An RED subdomain region spans residues 93-141 (KVVDKIADYKRQNPTMFAWEIRDRLLAEGICDNDTVPSVSSINRIIRTK). Residues 142–221 (VQQPFHPTPD…GDSQSSVESL (80 aa)) are disordered. Over residues 163–175 (VPSTASPPVSSAS) the composition is skewed to low complexity.

As to expression, expression becomes spatially localized at mid-gastrula stages and is localized to the nervous system (midbrain, hindbrain, spinal cord), sensory organs (optic vesicle and stalk, otic vesicle), visceral arches, developing excretory system (pronephros, pronephric duct, rectal diverticulum, proctodaeum) and thryoid gland. Splicing does not appear to be tissue-specific.

The protein localises to the nucleus. Its function is as follows. Probable transcription factor. Involved in kidney development, acting synergistically with lhx1/lim-1 in pronephric morphogenesis during the tailbud stages. This is Paired box protein Pax-2-B (pax2-b) from Xenopus laevis (African clawed frog).